Consider the following 60-residue polypeptide: Large ribosomal subunit protein bL32 (60 aa).

The protein belongs to the bacterial ribosomal protein bL32 family.

This is Large ribosomal subunit protein bL32 from Borreliella afzelii (strain PKo) (Borrelia afzelii).